A 331-amino-acid chain; its full sequence is Major outer membrane protein P.IB (331 aa).

The first 19 residues, Met1–Ala19, serve as a signal peptide directing secretion.

This sequence belongs to the Gram-negative porin family. As to quaternary structure, homotrimer.

Its subcellular location is the cell outer membrane. Functionally, serves as a slightly cation selective porin. The polypeptide is Major outer membrane protein P.IB (porB) (Neisseria meningitidis serogroup B (strain ATCC BAA-335 / MC58)).